The primary structure comprises 437 residues: Amino-acid acetyltransferase (437 aa).

Residues 289 to 429 enclose the N-acetyltransferase domain; it reads ENIRLATSFD…EHYNYQRMSK (141 aa).

The protein belongs to the acetyltransferase family. ArgA subfamily.

It is found in the cytoplasm. It catalyses the reaction L-glutamate + acetyl-CoA = N-acetyl-L-glutamate + CoA + H(+). It functions in the pathway amino-acid biosynthesis; L-arginine biosynthesis; N(2)-acetyl-L-ornithine from L-glutamate: step 1/4. This chain is Amino-acid acetyltransferase, found in Actinobacillus pleuropneumoniae serotype 5b (strain L20).